Here is a 98-residue protein sequence, read N- to C-terminus: UPF0213 protein LACR_2011 (98 aa).

Positions 2–79 constitute a GIY-YIG domain; sequence NTHFTYVLQC…KLVRQQKLKL (78 aa).

The protein belongs to the UPF0213 family.

This chain is UPF0213 protein LACR_2011, found in Lactococcus lactis subsp. cremoris (strain SK11).